Consider the following 136-residue polypeptide: NADPH-dependent 7-cyano-7-deazaguanine reductase (136 aa).

The active-site Thioimide intermediate is Cys50. Asp57 (proton donor) is an active-site residue. Substrate is bound by residues 72-74 (YEL) and 91-92 (HE).

Belongs to the GTP cyclohydrolase I family. QueF type 1 subfamily.

Its subcellular location is the cytoplasm. It catalyses the reaction 7-aminomethyl-7-carbaguanine + 2 NADP(+) = 7-cyano-7-deazaguanine + 2 NADPH + 3 H(+). The protein operates within tRNA modification; tRNA-queuosine biosynthesis. Functionally, catalyzes the NADPH-dependent reduction of 7-cyano-7-deazaguanine (preQ0) to 7-aminomethyl-7-deazaguanine (preQ1). In Prochlorococcus marinus (strain MIT 9215), this protein is NADPH-dependent 7-cyano-7-deazaguanine reductase.